Here is a 202-residue protein sequence, read N- to C-terminus: Pycsar effector protein PtPycTM (202 aa).

3 helical membrane-spanning segments follow: residues 60-80 (GVVLAFVGVMAAGLITIAADI), 85-105 (LVILCIEGAAAVLILASAVLA), and 181-201 (ILVGMLGLVCLFVLAAGVALG).

It localises to the cell membrane. In terms of biological role, pycsar (pyrimidine cyclase system for antiphage resistance) provides immunity against bacteriophage. The pyrimidine cyclase (PycC) synthesizes cyclic nucleotides in response to infection; these serve as specific second messenger signals. The signals activate the adjacent effector, leading to bacterial cell death and abortive phage infection. A clade D Pycsar system. The effector gene of a two-gene Pycsar system. Expression of this and adjacent uridylate cyclase PtPycC (AC A0A4V2JTK3) probably confers resistance to bacteriophage. The genes are probably only expressed in response to bacteriophage infection. Probably only responds to cUMP (produced by its cognate NTP cyclase), acts by impairing membrane integrity. The protein is Pycsar effector protein PtPycTM of Propioniciclava tarda.